Here is a 354-residue protein sequence, read N- to C-terminus: Guanine nucleotide-binding protein alpha-3 subunit (354 aa).

Glycine 2 carries the N-myristoyl glycine lipid modification. A lipid anchor (S-palmitoyl cysteine) is attached at cysteine 4. The G-alpha domain occupies 33-354; that stretch reads KECKILLLGS…TNALKDSGIL (322 aa). The interval 36-49 is G1 motif; the sequence is KILLLGSGESGKST. GTP-binding positions include 41-48, 177-183, 202-206, 271-274, and alanine 326; these read GSGESGKS, LRARSKT, DVGGQ, and NKID. Serine 48 and threonine 183 together coordinate Mg(2+). Residues 175–183 form a G2 motif region; sequence DVLRARSKT. Residues 198–207 form a G3 motif region; it reads IHLFDVGGQR. Residues 267-274 form a G4 motif region; sequence ILFLNKID. Residues 324-329 are G5 motif; the sequence is TQATDT.

The protein belongs to the G-alpha family. In terms of assembly, g proteins are composed of 3 units; alpha, beta and gamma. The alpha chain contains the guanine nucleotide binding site.

Its function is as follows. Guanine nucleotide-binding proteins (G proteins) are involved as modulators or transducers in various transmembrane signaling systems. This subunit is involved in cAMP regulation and morphogenesis. It is essential for dimorphic switching in haploid cells. The chain is Guanine nucleotide-binding protein alpha-3 subunit (FIL1) from Ustilago hordei (Barley covered smut fungus).